The chain runs to 426 residues: Inhibin beta A chain (426 aa).

An N-terminal signal peptide occupies residues 1-20; the sequence is MPLLWLRGFLLASCWIIVKS. Positions 21–310 are excised as a propeptide; sequence SPTPGSEGHS…EDHPHRRRRR (290 aa). The N-linked (GlcNAc...) asparagine glycan is linked to Asn165. The span at 177–186 shows a compositional bias: polar residues; the sequence is QQQKHPQGSS. Disordered regions lie at residues 177–201 and 260–291; these read QQQKHPQGSSDTREEAEEADLMEER and KKKKEEEGEGKKKDGGEAGAGVDEEKEQSHRP. A compositionally biased stretch (basic and acidic residues) spans 263 to 275; sequence KEEEGEGKKKDGG. 4 disulfide bridges follow: Cys314–Cys322, Cys321–Cys391, Cys350–Cys423, and Cys354–Cys425.

The protein belongs to the TGF-beta family. Dimeric, linked by one or more disulfide bonds. Inhibin A is a dimer of alpha/INHA and beta-A/INHBA. Activin A is a homodimer of beta-A/INHBA. Activin AB is a dimer of beta-A/INHBA and beta-B/INHBB. Interacts with FST and FSTL3; these interactions prevent activin A interaction to its type II receptor. Activin A interacts with ACVR2A. Activin A interacts with BMPR2. Inhibin A interacts with ACVR1; this interaction creates a non-signaling complex (NSC) that inhibits ACVR1-mediated BMP signaling. Inhibin A interacts with ACVR2A.

It is found in the secreted. Its function is as follows. Inhibins/activins are involved in regulating a number of diverse functions such as hypothalamic and pituitary hormone secretion, gonadal hormone secretion, germ cell development and maturation, erythroid differentiation, insulin secretion, nerve cell survival, embryonic axial development or bone growth, depending on their subunit composition. Functionally, activin A is a homodimer of INHBA that plays a role in several essential biological processes including embryonic development, stem cell maintenance and differentiation, haematopoiesis, cell proliferation and tissue fibrosis. Signals through type I (such as ACVR1B or ACVR1C) and type II receptors (such as ACVR2A, ACVR2B or BMPR2) which, upon ligand binding, phosphorylate SMAD2 and SMAD3 intracellular signaling mediators that form a complex with SMAD4, translocate to the nucleus and modulate gene expression. Can also activate alternative non-canonical intracellular signaling pathways including the p38 MAPK, extracellular signal-regulated kinases 1/2 (ERK1/2) and c-Jun N-terminal kinases (JNKs) to modulate cell migration and differentiation. Alternatively, promotes osteoblastic differentiation via ACVRL1-SMAD1/5/9 pathway. In addition, can engage the type I receptor ACVR1 to form an ACVR1-activin A-type II receptor non-signaling complex (NSC) that renders receptors unavailable for engagement with BMPs, hence resulting in an apparent inhibition of ACVR1-mediated BMP signaling. Inhibin A is a dimer of alpha/INHA and beta-A/INHBA that functions as a feedback regulator in the hypothalamic-pituitary-gonadal (HPG) axis. Inhibits the secretion of FSH from the anterior pituitary gland by acting on pituitary gonadotrope cells. Antagonizes activin A by binding to the proteoglycan, betaglycan, and forming a stable complex with and, thereby, sequestering type II activin receptors while excluding type I receptor. The chain is Inhibin beta A chain (INHBA) from Equus caballus (Horse).